A 409-amino-acid chain; its full sequence is Serine/threonine transporter SstT (409 aa).

9 helical membrane-spanning segments follow: residues 24 to 44 (LALGIVIGSVSPQLGLAAGLF), 48 to 68 (FVGALKAVAPVLVFILVAATI), 82 to 102 (IIVLYLIGTFSAALTAVIAGM), 142 to 162 (AIANANYIGILAWALVLGAAL), 194 to 214 (LGIFGLVSSTIAETGFGALAG), 218 to 238 (LLAVLLGCMAFIALVVNPAIV), 292 to 312 (IPLGATVNMGGAAITITVLAM), 319 to 339 (GIQVDFATALLLSLVATVSAC), and 365 to 385 (VAMQVVAVGFIIGVIQDSAET).

Belongs to the dicarboxylate/amino acid:cation symporter (DAACS) (TC 2.A.23) family.

The protein resides in the cell inner membrane. It carries out the reaction L-serine(in) + Na(+)(in) = L-serine(out) + Na(+)(out). It catalyses the reaction L-threonine(in) + Na(+)(in) = L-threonine(out) + Na(+)(out). In terms of biological role, involved in the import of serine and threonine into the cell, with the concomitant import of sodium (symport system). The sequence is that of Serine/threonine transporter SstT from Neisseria meningitidis serogroup C (strain 053442).